The sequence spans 218 residues: Probable nicotinate-nucleotide adenylyltransferase (218 aa).

This sequence belongs to the NadD family.

The enzyme catalyses nicotinate beta-D-ribonucleotide + ATP + H(+) = deamido-NAD(+) + diphosphate. It functions in the pathway cofactor biosynthesis; NAD(+) biosynthesis; deamido-NAD(+) from nicotinate D-ribonucleotide: step 1/1. Functionally, catalyzes the reversible adenylation of nicotinate mononucleotide (NaMN) to nicotinic acid adenine dinucleotide (NaAD). The polypeptide is Probable nicotinate-nucleotide adenylyltransferase (Acidithiobacillus ferrooxidans (strain ATCC 23270 / DSM 14882 / CIP 104768 / NCIMB 8455) (Ferrobacillus ferrooxidans (strain ATCC 23270))).